Here is a 257-residue protein sequence, read N- to C-terminus: tRNA-cytidine(32) 2-sulfurtransferase (257 aa).

The PP-loop motif signature appears at 37 to 42; that stretch reads SGGKDS. [4Fe-4S] cluster-binding residues include C112, C115, and C202.

Belongs to the TtcA family. In terms of assembly, homodimer. It depends on Mg(2+) as a cofactor. Requires [4Fe-4S] cluster as cofactor.

The protein resides in the cytoplasm. It catalyses the reaction cytidine(32) in tRNA + S-sulfanyl-L-cysteinyl-[cysteine desulfurase] + AH2 + ATP = 2-thiocytidine(32) in tRNA + L-cysteinyl-[cysteine desulfurase] + A + AMP + diphosphate + H(+). Its pathway is tRNA modification. Its function is as follows. Catalyzes the ATP-dependent 2-thiolation of cytidine in position 32 of tRNA, to form 2-thiocytidine (s(2)C32). The sulfur atoms are provided by the cysteine/cysteine desulfurase (IscS) system. The chain is tRNA-cytidine(32) 2-sulfurtransferase from Geobacter metallireducens (strain ATCC 53774 / DSM 7210 / GS-15).